We begin with the raw amino-acid sequence, 503 residues long: Inosine-5'-monophosphate dehydrogenase (503 aa).

K(+)-binding residues include Gly20 and Ser22. 2 CBS domains span residues 103 to 163 (FVVS…ETKV) and 167 to 228 (MTPF…LVDS). 261-263 (DSS) is a binding site for NAD(+). Residues Asp264, Phe266, Gly314, and Gly316 each contribute to the K(+) site. 312–314 (GIG) serves as a coordination point for NAD(+). Position 317 (Ser317) interacts with IMP. Cys319 is a K(+) binding site. Residue Cys319 is the Thioimidate intermediate of the active site. IMP-binding positions include 358 to 360 (DGG), 381 to 382 (GR), and 405 to 409 (YWGEG). Catalysis depends on Arg418, which acts as the Proton acceptor. Glu431 provides a ligand contact to IMP. K(+) is bound by residues Asn460, Glu485, Gly486, and Gly487.

Belongs to the IMPDH/GMPR family. As to quaternary structure, homotetramer. Requires K(+) as cofactor.

The protein resides in the cytoplasm. The catalysed reaction is IMP + NAD(+) + H2O = XMP + NADH + H(+). It functions in the pathway purine metabolism; XMP biosynthesis via de novo pathway; XMP from IMP: step 1/1. Its activity is regulated as follows. Mycophenolic acid (MPA) is a non-competitive inhibitor that prevents formation of the closed enzyme conformation by binding to the same site as the amobile flap. In contrast, mizoribine monophosphate (MZP) is a competitive inhibitor that induces the closed conformation. MPA is a potent inhibitor of mammalian IMPDHs but a poor inhibitor of the bacterial enzymes. MZP is a more potent inhibitor of bacterial IMPDH. Its function is as follows. Catalyzes the conversion of inosine 5'-phosphate (IMP) to xanthosine 5'-phosphate (XMP), the first committed and rate-limiting step in the de novo synthesis of guanine nucleotides, and therefore plays an important role in the regulation of cell growth. Could also have a single-stranded nucleic acid-binding activity and could play a role in RNA and/or DNA metabolism. The sequence is that of Inosine-5'-monophosphate dehydrogenase from Tritrichomonas foetus (Trichomonas foetus).